The primary structure comprises 87 residues: Phosphoribosyl-ATP pyrophosphatase (87 aa).

It belongs to the PRA-PH family.

The protein resides in the cytoplasm. It carries out the reaction 1-(5-phospho-beta-D-ribosyl)-ATP + H2O = 1-(5-phospho-beta-D-ribosyl)-5'-AMP + diphosphate + H(+). It functions in the pathway amino-acid biosynthesis; L-histidine biosynthesis; L-histidine from 5-phospho-alpha-D-ribose 1-diphosphate: step 2/9. This chain is Phosphoribosyl-ATP pyrophosphatase, found in Bifidobacterium adolescentis (strain ATCC 15703 / DSM 20083 / NCTC 11814 / E194a).